We begin with the raw amino-acid sequence, 318 residues long: Nisin-resistance protein (318 aa).

The helical transmembrane segment at 7-28 (ILLGLVAVCALFLGIIYLWGYK) threads the bilayer.

The protein localises to the cell membrane. The sequence is that of Nisin-resistance protein (nsr) from Lactococcus lactis subsp. lactis (Streptococcus lactis).